Here is a 290-residue protein sequence, read N- to C-terminus: Shikimate dehydrogenase (NADP(+)) (290 aa).

Shikimate-binding positions include 18-20 (SYS) and Thr66. Lys70 acts as the Proton acceptor in catalysis. Position 82 (Glu82) interacts with NADP(+). Residues Asn91 and Asp106 each contribute to the shikimate site. Residues 130 to 134 (GSGGA) and Met229 each bind NADP(+). Shikimate is bound at residue Tyr231. NADP(+) is bound at residue Gly252.

Belongs to the shikimate dehydrogenase family. In terms of assembly, homodimer.

It catalyses the reaction shikimate + NADP(+) = 3-dehydroshikimate + NADPH + H(+). Its pathway is metabolic intermediate biosynthesis; chorismate biosynthesis; chorismate from D-erythrose 4-phosphate and phosphoenolpyruvate: step 4/7. Its function is as follows. Involved in the biosynthesis of the chorismate, which leads to the biosynthesis of aromatic amino acids. Catalyzes the reversible NADPH linked reduction of 3-dehydroshikimate (DHSA) to yield shikimate (SA). This Chlorobium phaeovibrioides (strain DSM 265 / 1930) (Prosthecochloris vibrioformis (strain DSM 265)) protein is Shikimate dehydrogenase (NADP(+)).